A 254-amino-acid chain; its full sequence is Alcohol dehydrogenase (254 aa).

Residue 10–33 (FVAGLGGIGFDTSREIVKSGPKNL) participates in NAD(+) binding. Ser138 is a substrate binding site. The Proton acceptor role is filled by Tyr151.

Belongs to the short-chain dehydrogenases/reductases (SDR) family. Homodimer.

The catalysed reaction is a primary alcohol + NAD(+) = an aldehyde + NADH + H(+). The enzyme catalyses a secondary alcohol + NAD(+) = a ketone + NADH + H(+). The sequence is that of Alcohol dehydrogenase (Adh) from Drosophila mayaguana (Fruit fly).